The chain runs to 415 residues: Squalene synthase 2 (415 aa).

The next 2 helical transmembrane spans lie at 281-301 (AIFR…ALCY) and 392-412 (LIVI…SNLP).

Belongs to the phytoene/squalene synthase family. Mg(2+) serves as cofactor. Mn(2+) is required as a cofactor.

The protein resides in the endoplasmic reticulum membrane. The enzyme catalyses 2 (2E,6E)-farnesyl diphosphate + NADH + H(+) = squalene + 2 diphosphate + NAD(+). It carries out the reaction 2 (2E,6E)-farnesyl diphosphate + NADPH + H(+) = squalene + 2 diphosphate + NADP(+). The protein operates within terpene metabolism; lanosterol biosynthesis; lanosterol from farnesyl diphosphate: step 1/3. In terms of biological role, component of the triterpene saponins (e.g. ginsenosides or panaxosides) and phytosterols biosynthetic pathways. Catalyzes the biosynthesis of squalene. The sequence is that of Squalene synthase 2 from Panax ginseng (Korean ginseng).